We begin with the raw amino-acid sequence, 182 residues long: Peptidoglycan-recognition protein SB2 (182 aa).

Residues 1–17 form the signal peptide; it reads MKLQLALVLCGLTLALG. An N-acetylmuramoyl-L-alanine amidase domain is found at 40-165; the sequence is PVRLIIIHHT…CQTKATACPG (126 aa). Histidine 47 contributes to the Zn(2+) binding site. Cysteine 54 and cysteine 60 are disulfide-bonded. The N-linked (GlcNAc...) asparagine glycan is linked to asparagine 149. Histidine 155 and cysteine 163 together coordinate Zn(2+).

The protein belongs to the N-acetylmuramoyl-L-alanine amidase 2 family. The cofactor is Zn(2+).

The protein localises to the secreted. It catalyses the reaction Hydrolyzes the link between N-acetylmuramoyl residues and L-amino acid residues in certain cell-wall glycopeptides.. Functionally, N-acetylmuramyl-L-alanine amidase involved in innate immunity by degrading bacterial peptidoglycans (PGN). Probably plays a scavenger role by digesting biologically active PGN into biologically inactive fragments. Has no direct bacteriolytic activity. The polypeptide is Peptidoglycan-recognition protein SB2 (PGRP-SB2) (Drosophila melanogaster (Fruit fly)).